The chain runs to 113 residues: Mediator of RNA polymerase II transcription subunit 22 (113 aa).

This sequence belongs to the Mediator complex subunit 22 family. As to quaternary structure, component of the Mediator complex.

It localises to the nucleus. In terms of biological role, component of the Mediator complex, a coactivator involved in the regulated transcription of nearly all RNA polymerase II-dependent genes. Mediator functions as a bridge to convey information from gene-specific regulatory proteins to the basal RNA polymerase II transcription machinery. Mediator is recruited to promoters by direct interactions with regulatory proteins and serves as a scaffold for the assembly of a functional preinitiation complex with RNA polymerase II and the general transcription factors. The sequence is that of Mediator of RNA polymerase II transcription subunit 22 (SRB6) from Candida glabrata (strain ATCC 2001 / BCRC 20586 / JCM 3761 / NBRC 0622 / NRRL Y-65 / CBS 138) (Yeast).